Reading from the N-terminus, the 145-residue chain is 3-hydroxyacyl-[acyl-carrier-protein] dehydratase FabZ (145 aa).

The active site involves His-48.

The protein belongs to the thioester dehydratase family. FabZ subfamily.

The protein localises to the cytoplasm. The catalysed reaction is a (3R)-hydroxyacyl-[ACP] = a (2E)-enoyl-[ACP] + H2O. Its function is as follows. Involved in unsaturated fatty acids biosynthesis. Catalyzes the dehydration of short chain beta-hydroxyacyl-ACPs and long chain saturated and unsaturated beta-hydroxyacyl-ACPs. This chain is 3-hydroxyacyl-[acyl-carrier-protein] dehydratase FabZ, found in Campylobacter hominis (strain ATCC BAA-381 / DSM 21671 / CCUG 45161 / LMG 19568 / NCTC 13146 / CH001A).